We begin with the raw amino-acid sequence, 204 residues long: Urease accessory protein UreG (204 aa).

GTP is bound at residue 12–19 (GPVGSGKT).

It belongs to the SIMIBI class G3E GTPase family. UreG subfamily. In terms of assembly, homodimer. UreD, UreF and UreG form a complex that acts as a GTP-hydrolysis-dependent molecular chaperone, activating the urease apoprotein by helping to assemble the nickel containing metallocenter of UreC. The UreE protein probably delivers the nickel.

The protein resides in the cytoplasm. Functionally, facilitates the functional incorporation of the urease nickel metallocenter. This process requires GTP hydrolysis, probably effectuated by UreG. In Streptococcus salivarius (strain 57.I), this protein is Urease accessory protein UreG.